Here is a 153-residue protein sequence, read N- to C-terminus: Superoxide dismutase [Cu-Zn] (153 aa).

Cu cation is bound by residues His45, His47, and His62. A disulfide bridge links Cys56 with Cys145. His62, His70, His79, and Asp82 together coordinate Zn(2+). A Cu cation-binding site is contributed by His119.

It belongs to the Cu-Zn superoxide dismutase family. As to quaternary structure, homodimer. It depends on Cu cation as a cofactor. The cofactor is Zn(2+).

The protein localises to the cytoplasm. It carries out the reaction 2 superoxide + 2 H(+) = H2O2 + O2. Functionally, destroys radicals which are normally produced within the cells and which are toxic to biological systems. This is Superoxide dismutase [Cu-Zn] (SOD) from Schistosoma mansoni (Blood fluke).